We begin with the raw amino-acid sequence, 175 residues long: Translation initiation factor IF-3 (175 aa).

This sequence belongs to the IF-3 family. As to quaternary structure, monomer.

It is found in the cytoplasm. Functionally, IF-3 binds to the 30S ribosomal subunit and shifts the equilibrium between 70S ribosomes and their 50S and 30S subunits in favor of the free subunits, thus enhancing the availability of 30S subunits on which protein synthesis initiation begins. This Aquifex aeolicus (strain VF5) protein is Translation initiation factor IF-3.